The chain runs to 252 residues: Chitooligosaccharide deacetylase (252 aa).

Residues His-61 and His-125 each coordinate Mg(2+).

It belongs to the YdjC deacetylase family. ChbG subfamily. In terms of assembly, homodimer. Mg(2+) is required as a cofactor.

The protein localises to the cytoplasm. The catalysed reaction is N,N'-diacetylchitobiose + H2O = N-acetyl-beta-D-glucosaminyl-(1-&gt;4)-D-glucosamine + acetate. The enzyme catalyses diacetylchitobiose-6'-phosphate + H2O = N'-monoacetylchitobiose-6'-phosphate + acetate. It functions in the pathway glycan degradation; chitin degradation. Its function is as follows. Involved in the degradation of chitin. ChbG is essential for growth on the acetylated chitooligosaccharides chitobiose and chitotriose but is dispensable for growth on cellobiose and chitosan dimer, the deacetylated form of chitobiose. Deacetylation of chitobiose-6-P and chitotriose-6-P is necessary for both the activation of the chb promoter by the regulatory protein ChbR and the hydrolysis of phosphorylated beta-glucosides by the phospho-beta-glucosidase ChbF. Catalyzes the removal of only one acetyl group from chitobiose-6-P to yield monoacetylchitobiose-6-P, the inducer of ChbR and the substrate of ChbF. The chain is Chitooligosaccharide deacetylase from Escherichia coli (strain 55989 / EAEC).